Consider the following 291-residue polypeptide: N-acetylmannosamine kinase (291 aa).

ATP contacts are provided by residues 5 to 12 and 132 to 139; these read AIDIGGTK and GVGGGVVS. Residues His156, Cys166, Cys168, and Cys173 each coordinate Zn(2+).

Belongs to the ROK (NagC/XylR) family. NanK subfamily. As to quaternary structure, homodimer.

The catalysed reaction is an N-acyl-D-mannosamine + ATP = an N-acyl-D-mannosamine 6-phosphate + ADP + H(+). It functions in the pathway amino-sugar metabolism; N-acetylneuraminate degradation; D-fructose 6-phosphate from N-acetylneuraminate: step 2/5. Catalyzes the phosphorylation of N-acetylmannosamine (ManNAc) to ManNAc-6-P. This chain is N-acetylmannosamine kinase, found in Escherichia coli (strain ATCC 8739 / DSM 1576 / NBRC 3972 / NCIMB 8545 / WDCM 00012 / Crooks).